The primary structure comprises 201 residues: MPLILDQGCFVSESRFHRLAQNIKQGSRREREQKPLINDKIGFNEFILIDENGSNLGTVRRTDALKMAEEKQLDLVLIGSNPAKPIVKLLDFGRYTYDLKRKKRQSKKNQTIIQIKEVVVKPTIAKHDLEFKAKQTTGWAEKGYHVKFVVRAFGRVSTRIELIEKVFNDFYLLVEPAVEVQKPLTASSKTMYSALLVPRKK.

This sequence belongs to the IF-3 family. Monomer.

It is found in the cytoplasm. Functionally, IF-3 binds to the 30S ribosomal subunit and shifts the equilibrium between 70S ribosomes and their 50S and 30S subunits in favor of the free subunits, thus enhancing the availability of 30S subunits on which protein synthesis initiation begins. The protein is Translation initiation factor IF-3 of Mycoplasma pneumoniae (strain ATCC 29342 / M129 / Subtype 1) (Mycoplasmoides pneumoniae).